A 360-amino-acid polypeptide reads, in one-letter code: Lipid-A-disaccharide synthase (360 aa).

It belongs to the LpxB family.

The enzyme catalyses a lipid X + a UDP-2-N,3-O-bis[(3R)-3-hydroxyacyl]-alpha-D-glucosamine = a lipid A disaccharide + UDP + H(+). It participates in bacterial outer membrane biogenesis; LPS lipid A biosynthesis. Its function is as follows. Condensation of UDP-2,3-diacylglucosamine and 2,3-diacylglucosamine-1-phosphate to form lipid A disaccharide, a precursor of lipid A, a phosphorylated glycolipid that anchors the lipopolysaccharide to the outer membrane of the cell. The sequence is that of Lipid-A-disaccharide synthase from Helicobacter acinonychis (strain Sheeba).